Reading from the N-terminus, the 199-residue chain is Protein-methionine-sulfoxide reductase heme-binding subunit MsrQ (199 aa).

Helical transmembrane passes span 10-30 (WLKVCLHLAGFLPLLWLFWAI), 82-102 (LWCFVWATLHLTSYALLELGI), 116-136 (PYLTLGIISWLVLLALTLTST), and 153-173 (VVYLVAILAPIHYLWSVKILS).

Belongs to the MsrQ family. Heterodimer of a catalytic subunit (MsrP) and a heme-binding subunit (MsrQ). It depends on FMN as a cofactor. Heme b is required as a cofactor.

It localises to the cell inner membrane. Its function is as follows. Part of the MsrPQ system that repairs oxidized periplasmic proteins containing methionine sulfoxide residues (Met-O), using respiratory chain electrons. Thus protects these proteins from oxidative-stress damage caused by reactive species of oxygen and chlorine generated by the host defense mechanisms. MsrPQ is essential for the maintenance of envelope integrity under bleach stress, rescuing a wide series of structurally unrelated periplasmic proteins from methionine oxidation, including the primary periplasmic chaperone SurA and the lipoprotein Pal. MsrQ provides electrons for reduction to the reductase catalytic subunit MsrP, using the quinone pool of the respiratory chain. This Salmonella dublin (strain CT_02021853) protein is Protein-methionine-sulfoxide reductase heme-binding subunit MsrQ.